A 216-amino-acid chain; its full sequence is ATP phosphoribosyltransferase (216 aa).

The protein belongs to the ATP phosphoribosyltransferase family. Short subfamily. Heteromultimer composed of HisG and HisZ subunits.

It is found in the cytoplasm. The enzyme catalyses 1-(5-phospho-beta-D-ribosyl)-ATP + diphosphate = 5-phospho-alpha-D-ribose 1-diphosphate + ATP. Its pathway is amino-acid biosynthesis; L-histidine biosynthesis; L-histidine from 5-phospho-alpha-D-ribose 1-diphosphate: step 1/9. Catalyzes the condensation of ATP and 5-phosphoribose 1-diphosphate to form N'-(5'-phosphoribosyl)-ATP (PR-ATP). Has a crucial role in the pathway because the rate of histidine biosynthesis seems to be controlled primarily by regulation of HisG enzymatic activity. The sequence is that of ATP phosphoribosyltransferase from Nitrosomonas eutropha (strain DSM 101675 / C91 / Nm57).